The sequence spans 313 residues: NAD-capped RNA hydrolase NudC (313 aa).

Substrate is bound at residue R111. Residues 168-293 (PRIDPAVICL…DWSSASESKL (126 aa)) enclose the Nudix hydrolase domain. A divalent metal cation is bound by residues A202, E218, and E222. A Nudix box motif is present at residues 203–224 (GFVEAGESFEVCVAREIREEIG). 236–243 (QPWPFPRS) is a binding site for substrate. Residue E264 participates in a divalent metal cation binding.

This sequence belongs to the Nudix hydrolase family. NudC subfamily. Homodimer. It depends on Mg(2+) as a cofactor. Requires Mn(2+) as cofactor.

It catalyses the reaction a 5'-end NAD(+)-phospho-ribonucleoside in mRNA + H2O = a 5'-end phospho-adenosine-phospho-ribonucleoside in mRNA + beta-nicotinamide D-ribonucleotide + 2 H(+). It carries out the reaction NAD(+) + H2O = beta-nicotinamide D-ribonucleotide + AMP + 2 H(+). The enzyme catalyses NADH + H2O = reduced beta-nicotinamide D-ribonucleotide + AMP + 2 H(+). Its function is as follows. mRNA decapping enzyme that specifically removes the nicotinamide adenine dinucleotide (NAD) cap from a subset of mRNAs by hydrolyzing the diphosphate linkage to produce nicotinamide mononucleotide (NMN) and 5' monophosphate mRNA. The NAD-cap is present at the 5'-end of some mRNAs and stabilizes RNA against 5'-processing. Has preference for mRNAs with a 5'-end purine. Catalyzes the hydrolysis of a broad range of dinucleotide pyrophosphates. This Mycobacterium bovis (strain ATCC BAA-935 / AF2122/97) protein is NAD-capped RNA hydrolase NudC.